Reading from the N-terminus, the 326-residue chain is Tetraacyldisaccharide 4'-kinase (326 aa).

55–62 is an ATP binding site; the sequence is TAGGNGKT.

This sequence belongs to the LpxK family.

It catalyses the reaction a lipid A disaccharide + ATP = a lipid IVA + ADP + H(+). It participates in glycolipid biosynthesis; lipid IV(A) biosynthesis; lipid IV(A) from (3R)-3-hydroxytetradecanoyl-[acyl-carrier-protein] and UDP-N-acetyl-alpha-D-glucosamine: step 6/6. Its function is as follows. Transfers the gamma-phosphate of ATP to the 4'-position of a tetraacyldisaccharide 1-phosphate intermediate (termed DS-1-P) to form tetraacyldisaccharide 1,4'-bis-phosphate (lipid IVA). In Klebsiella pneumoniae subsp. pneumoniae (strain ATCC 700721 / MGH 78578), this protein is Tetraacyldisaccharide 4'-kinase.